The primary structure comprises 504 residues: Maturase K (504 aa).

It belongs to the intron maturase 2 family. MatK subfamily.

The protein resides in the plastid. It localises to the chloroplast. Its function is as follows. Usually encoded in the trnK tRNA gene intron. Probably assists in splicing its own and other chloroplast group II introns. The chain is Maturase K from Lablab purpureus (Hyacinth bean).